Reading from the N-terminus, the 611-residue chain is Phosphomethylpyrimidine synthase (611 aa).

Residues asparagine 212, methionine 241, tyrosine 270, histidine 306, 326–328, 367–370, and glutamate 406 contribute to the substrate site; these read SRG and DGLR. A Zn(2+)-binding site is contributed by histidine 410. Residue tyrosine 433 coordinates substrate. Histidine 474 contributes to the Zn(2+) binding site. Residues cysteine 554, cysteine 557, and cysteine 562 each coordinate [4Fe-4S] cluster.

This sequence belongs to the ThiC family. In terms of assembly, homodimer. [4Fe-4S] cluster serves as cofactor.

The catalysed reaction is 5-amino-1-(5-phospho-beta-D-ribosyl)imidazole + S-adenosyl-L-methionine = 4-amino-2-methyl-5-(phosphooxymethyl)pyrimidine + CO + 5'-deoxyadenosine + formate + L-methionine + 3 H(+). It functions in the pathway cofactor biosynthesis; thiamine diphosphate biosynthesis. In terms of biological role, catalyzes the synthesis of the hydroxymethylpyrimidine phosphate (HMP-P) moiety of thiamine from aminoimidazole ribotide (AIR) in a radical S-adenosyl-L-methionine (SAM)-dependent reaction. This Bartonella bacilliformis (strain ATCC 35685 / KC583 / Herrer 020/F12,63) protein is Phosphomethylpyrimidine synthase.